The sequence spans 49 residues: Large ribosomal subunit protein bL33A (49 aa).

This sequence belongs to the bacterial ribosomal protein bL33 family.

The sequence is that of Large ribosomal subunit protein bL33A from Staphylococcus aureus (strain COL).